The sequence spans 171 residues: 3-hydroxydecanoyl-[acyl-carrier-protein] dehydratase (171 aa).

The active site involves His70.

The protein belongs to the thioester dehydratase family. FabA subfamily. As to quaternary structure, homodimer.

The protein localises to the cytoplasm. The enzyme catalyses a (3R)-hydroxyacyl-[ACP] = a (2E)-enoyl-[ACP] + H2O. It carries out the reaction (3R)-hydroxydecanoyl-[ACP] = (2E)-decenoyl-[ACP] + H2O. It catalyses the reaction (2E)-decenoyl-[ACP] = (3Z)-decenoyl-[ACP]. Its pathway is lipid metabolism; fatty acid biosynthesis. Necessary for the introduction of cis unsaturation into fatty acids. Catalyzes the dehydration of (3R)-3-hydroxydecanoyl-ACP to E-(2)-decenoyl-ACP and then its isomerization to Z-(3)-decenoyl-ACP. Can catalyze the dehydratase reaction for beta-hydroxyacyl-ACPs with saturated chain lengths up to 16:0, being most active on intermediate chain length. This Xanthomonas axonopodis pv. citri (strain 306) protein is 3-hydroxydecanoyl-[acyl-carrier-protein] dehydratase.